A 389-amino-acid polypeptide reads, in one-letter code: Methylthioribose kinase (389 aa).

Residues Asn37, Lys52, and 106 to 108 (EDL) each bind ATP. A substrate-binding site is contributed by Asp224. 241–243 (DPE) is an ATP binding site. Arg331 contacts substrate.

Belongs to the methylthioribose kinase family. In terms of assembly, homodimer.

The enzyme catalyses 5-(methylsulfanyl)-D-ribose + ATP = 5-(methylsulfanyl)-alpha-D-ribose 1-phosphate + ADP + H(+). It participates in amino-acid biosynthesis; L-methionine biosynthesis via salvage pathway; S-methyl-5-thio-alpha-D-ribose 1-phosphate from S-methyl-5'-thioadenosine (hydrolase route): step 2/2. Catalyzes the phosphorylation of methylthioribose into methylthioribose-1-phosphate. The chain is Methylthioribose kinase from Exiguobacterium sibiricum (strain DSM 17290 / CCUG 55495 / CIP 109462 / JCM 13490 / 255-15).